Here is a 365-residue protein sequence, read N- to C-terminus: Homeobox protein Nkx-6.1 (365 aa).

Residues 35–136 (LYPAAYPPLP…SSSSASATSA (102 aa)) form a disordered region. 3 stretches are compositionally biased toward low complexity: residues 48-59 (PSSSSSSSSSSS), 69-92 (PGGL…QLSA), and 110-136 (ASGA…ATSA). The segment at 102–269 (LSRPSMPVAS…KYLAGPERAR (168 aa)) is repressor domain. Residue Arg190 is modified to Asymmetric dimethylarginine. Residues 237-296 (RKHTRPTFSGQQIFALEKTFEQTKYLAGPERARLAYSLGMTESQVKVWFQNRRTKWRKKH) constitute a DNA-binding region (homeobox). The tract at residues 295 to 365 (KHAAEMATAK…LHASEAEGSS (71 aa)) is disordered. Over residues 305–318 (KKQDSETERLKGTS) the composition is skewed to basic and acidic residues. The interval 307–365 (QDSETERLKGTSENEEDDDDYNKPLDPNSDDEKITQLLKKHKSSGGSLLLHASEAEGSS) is involved in DNA-binding.

In terms of tissue distribution, pancreatic beta cells.

Its subcellular location is the nucleus. In terms of biological role, transcription factor which binds to specific A/T-rich DNA sequences in the promoter regions of a number of genes. Involved in the development of insulin-producing beta cells in the islets of Langerhans at the secondary transition. Together with NKX2-2 and IRX3 acts to restrict the generation of motor neurons to the appropriate region of the neural tube. Belongs to the class II proteins of neuronal progenitor factors, which are induced by SHH signals. This chain is Homeobox protein Nkx-6.1 (Nkx6-1), found in Rattus norvegicus (Rat).